A 398-amino-acid polypeptide reads, in one-letter code: Dual specificity mitogen-activated protein kinase kinase 2 (398 aa).

The tract at residues M1–E29 is disordered. Residues F70 to I367 enclose the Protein kinase domain. Residues L76–V84 and K99 each bind ATP. The Proton acceptor role is filled by D192. Phosphoserine; by RAF occurs at positions 220 and 224.

Belongs to the protein kinase superfamily. STE Ser/Thr protein kinase family. MAP kinase kinase subfamily. In terms of processing, activated by phosphorylation on Ser/Thr catalyzed by MAP kinase kinase kinases (RAF).

The catalysed reaction is L-seryl-[protein] + ATP = O-phospho-L-seryl-[protein] + ADP + H(+). It carries out the reaction L-threonyl-[protein] + ATP = O-phospho-L-threonyl-[protein] + ADP + H(+). It catalyses the reaction L-tyrosyl-[protein] + ATP = O-phospho-L-tyrosyl-[protein] + ADP + H(+). Its function is as follows. Catalyzes the concomitant phosphorylation of a threonine and a tyrosine residue in a Thr-Glu-Tyr sequence located in MAP kinases. Activates the ERK1 and ERK2 MAP kinases. This is Dual specificity mitogen-activated protein kinase kinase 2 (MAP2K2) from Gallus gallus (Chicken).